A 414-amino-acid chain; its full sequence is Transforming growth factor beta-2 proprotein (414 aa).

Residues 1 to 20 form the signal peptide; sequence MHYCVLSTFLLLHLVPVALS. Asn72, Asn140, and Asn241 each carry an N-linked (GlcNAc...) asparagine glycan. 4 cysteine pairs are disulfide-bonded: Cys309-Cys318, Cys317-Cys380, Cys346-Cys411, and Cys350-Cys413.

The protein belongs to the TGF-beta family. As to quaternary structure, interacts with the serine proteases, HTRA1 and HTRA3. Interacts with ASPN. Interacts with MFAP5. In terms of assembly, interacts with Transforming growth factor beta-2 (TGF-beta-2) chain; interaction is non-covalent and maintains (TGF-beta-2) in a latent state. Interacts with LRRC32/GARP; leading to regulate activation of TGF-beta-2. Interacts with NREP; the interaction results in a decrease in TGFB2 autoinduction. Transforming growth factor beta-2: Homodimer; disulfide-linked. Transforming growth factor beta-2: Interacts with TGF-beta receptors (TGFBR1 and TGFBR2), leading to signal transduction. Post-translationally, the precursor proprotein is cleaved in the Golgi apparatus to form Transforming growth factor beta-2 (TGF-beta-2) and Latency-associated peptide (LAP) chains, which remain non-covalently linked, rendering TGF-beta-2 inactive.

It is found in the secreted. It localises to the extracellular space. The protein resides in the extracellular matrix. Its function is as follows. Precursor of the Latency-associated peptide (LAP) and Transforming growth factor beta-2 (TGF-beta-2) chains, which constitute the regulatory and active subunit of TGF-beta-2, respectively. In terms of biological role, required to maintain the Transforming growth factor beta-2 (TGF-beta-2) chain in a latent state during storage in extracellular matrix. Associates non-covalently with TGF-beta-2 and regulates its activation via interaction with 'milieu molecules', such as LTBP1 and LRRC32/GARP, that control activation of TGF-beta-2. Functionally, multifunctional protein that regulates various processes such as angiogenesis and heart development. Activation into mature form follows different steps: following cleavage of the proprotein in the Golgi apparatus, Latency-associated peptide (LAP) and Transforming growth factor beta-2 (TGF-beta-2) chains remain non-covalently linked rendering TGF-beta-2 inactive during storage in extracellular matrix. At the same time, LAP chain interacts with 'milieu molecules', such as LTBP1 and LRRC32/GARP, that control activation of TGF-beta-2 and maintain it in a latent state during storage in extracellular milieus. Once activated following release of LAP, TGF-beta-2 acts by binding to TGF-beta receptors (TGFBR1 and TGFBR2), which transduce signal. The sequence is that of Transforming growth factor beta-2 proprotein (Tgfb2) from Mus musculus (Mouse).